The chain runs to 90 residues: Small ribosomal subunit protein bS16 (90 aa).

This sequence belongs to the bacterial ribosomal protein bS16 family.

This Listeria monocytogenes serotype 4b (strain F2365) protein is Small ribosomal subunit protein bS16.